Consider the following 138-residue polypeptide: Large ribosomal subunit protein uL16 (138 aa).

The protein belongs to the universal ribosomal protein uL16 family. In terms of assembly, part of the 50S ribosomal subunit.

Functionally, binds 23S rRNA and is also seen to make contacts with the A and possibly P site tRNAs. The chain is Large ribosomal subunit protein uL16 from Chlamydia caviae (strain ATCC VR-813 / DSM 19441 / 03DC25 / GPIC) (Chlamydophila caviae).